Reading from the N-terminus, the 190-residue chain is Protein LZIC (190 aa).

A coiled-coil region spans residues 2-63 (ASRGKTETSK…SEFNDSLKKI (62 aa)).

This sequence belongs to the CTNNBIP1 family. In terms of assembly, does not interact with CTNNB1. Ubiquitously expressed, with highest levels in kidney. Up-regulated in several cases of gastric cancers.

This chain is Protein LZIC (LZIC), found in Homo sapiens (Human).